The following is a 65-amino-acid chain: Protein YSY6 (65 aa).

Residues 45 to 65 (LGILLFLLVGGGVLQLISYIL) form a helical membrane-spanning segment.

This sequence belongs to the RAMP4 family.

The protein localises to the membrane. It localises to the endoplasmic reticulum membrane. In terms of biological role, interacts with target proteins during their translocation into the lumen of the endoplasmic reticulum. Protects unfolded target proteins against degradation during ER stress. May facilitate glycosylation of target proteins after termination of ER stress. This is Protein YSY6 (YSY6) from Saccharomyces cerevisiae (strain ATCC 204508 / S288c) (Baker's yeast).